Reading from the N-terminus, the 689-residue chain is Methionine--tRNA ligase (689 aa).

The 'HIGH' region signature appears at 19–29; sequence PYPTGDLHIGH. Zn(2+) contacts are provided by Cys-150, Cys-153, Cys-162, and Cys-166. The 'KMSKS' region motif lies at 338–342; the sequence is GLSTS. Thr-341 contacts ATP. The 99-residue stretch at 591–689 folds into the tRNA-binding domain; it reads EFQALDLRVG…EDSEPGTKVM (99 aa).

Belongs to the class-I aminoacyl-tRNA synthetase family. MetG type 1 subfamily. In terms of assembly, homodimer. Zn(2+) serves as cofactor.

The protein resides in the cytoplasm. It carries out the reaction tRNA(Met) + L-methionine + ATP = L-methionyl-tRNA(Met) + AMP + diphosphate. Is required not only for elongation of protein synthesis but also for the initiation of all mRNA translation through initiator tRNA(fMet) aminoacylation. This chain is Methionine--tRNA ligase, found in Halobacterium salinarum (strain ATCC 700922 / JCM 11081 / NRC-1) (Halobacterium halobium).